The chain runs to 353 residues: MVDTHKLADDVLQLLDNRIEDNYRVCVILVGSPGSGKSTIAEELCQIINEKYHTFLSEHPNVIEVNDRLKPMVNLVDSLKTLQPNEVAEMIENQGLFKDHVEDVNFQPIKYSALTSNNEECTAVVARGGTANAIRIATVDNPVNVNKLAQDSINIAQIVPMDGFHLSRRCLDLFKDPQTAHKRRGSPSTFDSNNFLQLCKILAKTSLCKVSSHHKFYSTSSVFEKLSKTFSQTIPDIFVPGFNHALKDPTPDQYCISKFTRIVILEGLYLLYDQENWKKIYKTLADTGALLVYKIDIDYEATEERVAKRHLQSGLVTTIAEGREKFRSNDLLNGRDIDNHLIKVDNIVHIRND.

31–39 (GSPGSGKST) serves as a coordination point for ATP.

Belongs to the YFH7 family.

ATP-dependent kinase that could be involved in endoplasmic reticulum membrane assembly. The sequence is that of ATP-dependent kinase YFH7 (YFH7) from Saccharomyces cerevisiae (strain RM11-1a) (Baker's yeast).